Consider the following 150-residue polypeptide: Allograft inflammatory factor 1-like (150 aa).

An N-acetylserine modification is found at Ser2. At Ser2 the chain carries Phosphoserine. The 36-residue stretch at 47 to 82 folds into the EF-hand 1 domain; sequence EKLAAFKEKYMEFDLNNEGEIDLMSLKRMMEKLGVP. Ca(2+)-binding residues include Asp60, Asn62, Glu64, and Glu66. One can recognise an EF-hand 2; degenerate domain in the interval 83-117; it reads KTHLEMKKMISEVTGGVSDTISYRDFVNMMLGKRS. Residues 129–150 form a disordered region; the sequence is KANESSPKPAGPPPERDIASLP. Ser134 carries the post-translational modification Phosphoserine.

In terms of assembly, homodimer (Potential). Monomer.

The protein localises to the cytoplasm. The protein resides in the cytoskeleton. Its subcellular location is the cell projection. It localises to the ruffle membrane. Functionally, actin-binding protein that promotes actin bundling. May neither bind calcium nor depend on calcium for function. This chain is Allograft inflammatory factor 1-like (Aif1l), found in Mus musculus (Mouse).